The following is a 1111-amino-acid chain: Phytochrome C (1111 aa).

Residues 213-393 (NMLLLCDALV…VFGVQINKEA (181 aa)) enclose the GAF domain. Residue Cys318 coordinates phytochromobilin. PAS domains are found at residues 604–674 (IVNE…LEGS) and 737–808 (DYAR…TKLR). A Histidine kinase domain is found at 889–1111 (YLRHEVKDPE…FVILTEFPLI (223 aa)).

It belongs to the phytochrome family. As to quaternary structure, homodimer. Post-translationally, contains one covalently linked phytochromobilin chromophore.

Functionally, regulatory photoreceptor which exists in two forms that are reversibly interconvertible by light: the Pr form that absorbs maximally in the red region of the spectrum and the Pfr form that absorbs maximally in the far-red region. Photoconversion of Pr to Pfr induces an array of morphogenic responses, whereas reconversion of Pfr to Pr cancels the induction of those responses. Pfr controls the expression of a number of nuclear genes including those encoding the small subunit of ribulose-bisphosphate carboxylase, chlorophyll A/B binding protein, protochlorophyllide reductase, rRNA, etc. It also controls the expression of its own gene(s) in a negative feedback fashion. In Arabidopsis thaliana (Mouse-ear cress), this protein is Phytochrome C (PHYC).